Here is a 687-residue protein sequence, read N- to C-terminus: Putative ammonium transporter 3 (687 aa).

The next 11 helical transmembrane spans lie at 39-59, 77-97, 134-154, 162-182, 196-216, 240-260, 272-292, 299-319, 323-343, 352-372, and 404-424; these read AVWI…FGLL, VVDV…FSYG, ASFL…SGAV, SYIL…HWVW, FAGC…ATVF, LGTF…VWGI, AVAT…ISFV, VNFL…ICAV, WHAL…LPLL, VGIV…VGIF, and CTAA…FLIS. 3 disordered regions span residues 521–544, 549–568, and 592–687; these read RTNA…FNNQ, AVSS…RRTE, and PPEE…NPPV. A compositionally biased stretch (polar residues) spans 549 to 564; sequence AVSSTVSTARNGPSTG. 2 stretches are compositionally biased toward low complexity: residues 614-632 and 648-665; these read SPSS…SPSI and STAS…KNST.

It belongs to the ammonia transporter channel (TC 1.A.11.2) family.

The protein resides in the membrane. Involved in the uptake of ammonia. The chain is Putative ammonium transporter 3 (amt-3) from Caenorhabditis elegans.